The primary structure comprises 146 residues: Large ribosomal subunit protein uL15 (146 aa).

A disordered region spans residues 1–42; the sequence is MTIKLHDLQPARGSKTTRTRVGRGEASKGKTAGRGTKGTKAR.

Belongs to the universal ribosomal protein uL15 family. As to quaternary structure, part of the 50S ribosomal subunit.

In terms of biological role, binds to the 23S rRNA. This chain is Large ribosomal subunit protein uL15, found in Mycobacterium leprae (strain Br4923).